The sequence spans 515 residues: Adenine DNA glycosylase (515 aa).

Over residues 1–24 (MKKLQASVRSHKKQPANHKRRRTR) the composition is skewed to basic residues. The disordered stretch occupies residues 1–38 (MKKLQASVRSHKKQPANHKRRRTRALSSSQAKPSSLDG). Residue Glu105 is the Proton donor/acceptor of the active site. Positions 261, 268, 271, and 277 each coordinate [4Fe-4S] cluster. Residues 335 to 466 (PREEYSATCV…AMKKVFRMYE (132 aa)) enclose the Nudix hydrolase domain. The short motif at 376 to 398 (VTLEPSEQHQHKALLQELQRWCG) is the Nudix box element. Residues 468-494 (HRQGTRKGSKRSQVCPPSSRKKPSLGQ) form a disordered region.

This sequence belongs to the Nth/MutY family. [4Fe-4S] cluster is required as a cofactor. Expressed in heart, lung, liver, intestine, brain and thymus.

The protein resides in the nucleus. It localises to the mitochondrion. The catalysed reaction is Hydrolyzes free adenine bases from 7,8-dihydro-8-oxoguanine:adenine mismatched double-stranded DNA, leaving an apurinic site.. Functionally, involved in oxidative DNA damage repair. Initiates repair of A*oxoG to C*G by removing the inappropriately paired adenine base from the DNA backbone. Possesses both adenine and 2-OH-A DNA glycosylase activities. The protein is Adenine DNA glycosylase (Mutyh) of Mus musculus (Mouse).